We begin with the raw amino-acid sequence, 155 residues long: Ribosomal RNA large subunit methyltransferase H (155 aa).

S-adenosyl-L-methionine is bound by residues Leu72, Gly103, and 122–127 (LSPLTL).

The protein belongs to the RNA methyltransferase RlmH family. Homodimer.

It localises to the cytoplasm. It catalyses the reaction pseudouridine(1915) in 23S rRNA + S-adenosyl-L-methionine = N(3)-methylpseudouridine(1915) in 23S rRNA + S-adenosyl-L-homocysteine + H(+). Functionally, specifically methylates the pseudouridine at position 1915 (m3Psi1915) in 23S rRNA. In Haemophilus ducreyi (strain 35000HP / ATCC 700724), this protein is Ribosomal RNA large subunit methyltransferase H.